Here is a 419-residue protein sequence, read N- to C-terminus: DNA primase DnaG (419 aa).

The region spanning 168–244 (DTIIVVEGRS…KVDYVARAPE (77 aa)) is the Toprim domain. Residues Glu174, Asp218, and Asp220 each coordinate Mg(2+). 2 stretches are compositionally biased toward basic and acidic residues: residues 280–291 (KPAEEAVKREEE) and 306–316 (KAAKPPEEKPP). A disordered region spans residues 280–317 (KPAEEAVKREEEAAAEAKPPAPAVQEKAAKPPEEKPPT).

Belongs to the archaeal DnaG primase family. As to quaternary structure, forms a ternary complex with MCM helicase and DNA. Component of the archaeal exosome complex. The cofactor is Mg(2+).

It catalyses the reaction ssDNA + n NTP = ssDNA/pppN(pN)n-1 hybrid + (n-1) diphosphate.. RNA polymerase that catalyzes the synthesis of short RNA molecules used as primers for DNA polymerase during DNA replication. Also part of the exosome, which is a complex involved in RNA degradation. Acts as a poly(A)-binding protein that enhances the interaction between heteromeric, adenine-rich transcripts and the exosome. The sequence is that of DNA primase DnaG from Aeropyrum pernix (strain ATCC 700893 / DSM 11879 / JCM 9820 / NBRC 100138 / K1).